The chain runs to 115 residues: Large ribosomal subunit protein P2 (115 aa).

Methionine 1 carries the N-acetylmethionine modification. 2 positions are modified to phosphoserine: serine 17 and serine 19. Lysine 21 is subject to N6-acetyllysine; alternate. Lysine 21 carries the N6-succinyllysine; alternate modification. The span at 69–90 (GAXAVAAAPGSXAPAAGSAPAA) shows a compositional bias: low complexity. Positions 69 to 115 (GAXAVAAAPGSXAPAAGSAPAAAEEKKEEKKEESEESDDDMGFGLFD) are disordered. Phosphoserine occurs at positions 79 and 86. Basic and acidic residues predominate over residues 91 to 101 (AEEKKEEKKEE). 2 positions are modified to phosphoserine: serine 102 and serine 105.

The protein belongs to the eukaryotic ribosomal protein P1/P2 family. In terms of assembly, heterodimer with RPLP1 at the lateral ribosomal stalk of the large ribosomal subunit.

Functionally, plays an important role in the elongation step of protein synthesis. In Sus scrofa (Pig), this protein is Large ribosomal subunit protein P2 (RPLP2).